Consider the following 476-residue polypeptide: Beta-amyrin 28-monooxygenase (476 aa).

A helical membrane pass occupies residues 2-22; sequence ELLYVCLVCVFVFLVSLLLLY. Cys-421 is a binding site for heme.

This sequence belongs to the cytochrome P450 family. The cofactor is heme. As to expression, specifically expressed in roots.

It is found in the membrane. It carries out the reaction beta-amyrin + 3 reduced [NADPH--hemoprotein reductase] + 3 O2 = oleanolate + 3 oxidized [NADPH--hemoprotein reductase] + 4 H2O + 4 H(+). Its function is as follows. Catalyzes the carboxylation of beta-amyrin at the C-28 position to form oleanolate. Catalyzes the carboxylation of alpha-amyrin at the C-28 position to form ursolate. The sequence is that of Beta-amyrin 28-monooxygenase (CYP716A44) from Solanum lycopersicum (Tomato).